The sequence spans 292 residues: Elongation factor Ts (292 aa).

The segment at 80–83 (TDFV) is involved in Mg(2+) ion dislocation from EF-Tu.

Belongs to the EF-Ts family.

Its subcellular location is the cytoplasm. Functionally, associates with the EF-Tu.GDP complex and induces the exchange of GDP to GTP. It remains bound to the aminoacyl-tRNA.EF-Tu.GTP complex up to the GTP hydrolysis stage on the ribosome. The chain is Elongation factor Ts from Cupriavidus pinatubonensis (strain JMP 134 / LMG 1197) (Cupriavidus necator (strain JMP 134)).